The following is a 383-amino-acid chain: Retrovirus-related Pol polyprotein from type-1 retrotransposable element R1 3 (383 aa).

The Reverse transcriptase domain maps to 1 to 88 (VDAFADDLLL…DRVRYLGVNV (88 aa)). The interval 229-383 (LSLHECRELV…VQRMRENEES (155 aa)) is nucleic acid-binding endonuclease.

It catalyses the reaction DNA(n) + a 2'-deoxyribonucleoside 5'-triphosphate = DNA(n+1) + diphosphate. This is Retrovirus-related Pol polyprotein from type-1 retrotransposable element R1 3 from Nasonia vitripennis (Parasitic wasp).